The sequence spans 376 residues: Lipoyl synthase 1, chloroplastic (376 aa).

The segment covering methionine 1–leucine 13 has biased composition (polar residues). Disordered stretches follow at residues methionine 1–serine 25 and isoleucine 47–valine 75. The N-terminal 35 residues, methionine 1–arginine 35, are a transit peptide targeting the chloroplast. Residues cysteine 107, cysteine 112, cysteine 118, cysteine 138, cysteine 142, cysteine 145, and serine 353 each coordinate [4Fe-4S] cluster. Residues glycine 121–arginine 342 enclose the Radical SAM core domain.

Belongs to the radical SAM superfamily. Lipoyl synthase family. [4Fe-4S] cluster is required as a cofactor.

It is found in the plastid. The protein localises to the chloroplast. The catalysed reaction is [[Fe-S] cluster scaffold protein carrying a second [4Fe-4S](2+) cluster] + N(6)-octanoyl-L-lysyl-[protein] + 2 oxidized [2Fe-2S]-[ferredoxin] + 2 S-adenosyl-L-methionine + 4 H(+) = [[Fe-S] cluster scaffold protein] + N(6)-[(R)-dihydrolipoyl]-L-lysyl-[protein] + 4 Fe(3+) + 2 hydrogen sulfide + 2 5'-deoxyadenosine + 2 L-methionine + 2 reduced [2Fe-2S]-[ferredoxin]. It functions in the pathway protein modification; protein lipoylation via endogenous pathway; protein N(6)-(lipoyl)lysine from octanoyl-[acyl-carrier-protein]: step 2/2. In terms of biological role, catalyzes the radical-mediated insertion of two sulfur atoms into the C-6 and C-8 positions of the octanoyl moiety bound to the lipoyl domains of lipoate-dependent enzymes, thereby converting the octanoylated domains into lipoylated derivatives. The protein is Lipoyl synthase 1, chloroplastic of Populus trichocarpa (Western balsam poplar).